Reading from the N-terminus, the 411-residue chain is S-adenosylmethionine synthase (411 aa).

ATP is bound at residue histidine 15. Aspartate 17 contributes to the Mg(2+) binding site. Glutamate 43 is a binding site for K(+). L-methionine is bound by residues glutamate 56 and glutamine 99. Positions 99-109 (QSQEIAQGVDT) are flexible loop. Residues 179–181 (DGK), aspartate 260, 266–267 (RK), alanine 283, and lysine 287 contribute to the ATP site. Position 260 (aspartate 260) interacts with L-methionine. Lysine 291 lines the L-methionine pocket.

Belongs to the AdoMet synthase family. In terms of assembly, homotetramer; dimer of dimers. Mg(2+) is required as a cofactor. Requires K(+) as cofactor.

It localises to the cytoplasm. It carries out the reaction L-methionine + ATP + H2O = S-adenosyl-L-methionine + phosphate + diphosphate. The protein operates within amino-acid biosynthesis; S-adenosyl-L-methionine biosynthesis; S-adenosyl-L-methionine from L-methionine: step 1/1. In terms of biological role, catalyzes the formation of S-adenosylmethionine (AdoMet) from methionine and ATP. The overall synthetic reaction is composed of two sequential steps, AdoMet formation and the subsequent tripolyphosphate hydrolysis which occurs prior to release of AdoMet from the enzyme. The protein is S-adenosylmethionine synthase of Corynebacterium jeikeium (strain K411).